The sequence spans 443 residues: MEEDIDTRKINSSFLRDHSYATEADIISTVEFNSTGELLATGDKGGRVVIFQREQENKNQPHRRGEYNVYSTFQSHEPEFDYLKSLEIEEKINKIRWLPQQNAAYFLLSTNDKTVKLWKVSERDKRPEGYNLKDEDGRIRDPCTITSLRVPVLRPMDLMVEATPRRVFSNAHTYHINSISVNSDYETYMSADDLRINLWNLEITNRSFNIVDIKPTNMEELTEVITAAEFHPHNCNTFVYSSSKGTIRLCDMRSSALCDRHSKLFEEPEDPSNRSFFSEIISSISDVKFNHSGRYIMTRDYLTVKVWDLNMENRPIETYQVHDYLRSKLCSLYENDCIFDKFECVWNGSDSVIMTGSYNNFFRMFDRNTKRDVTLEASRENSKPRAILKPRKVCVGGKRRKDEISVDSLDFSKKILHTAWHPSENIIAVAATNNLYIFQDKVN.

WD repeat units follow at residues 22–61 (TEAD…KNQP), 87–128 (EIEE…KRPE), 171–209 (AHTY…RSFN), 220–260 (ELTE…LCDR), 279–317 (EIIS…RPIE), 334–375 (ENDC…DVTL), and 410–443 (DFSK…DKVN).

This sequence belongs to the phosphatase 2A regulatory subunit B family. As to quaternary structure, PP2A consists of a common heterodimeric core enzyme, composed of a 36 kDa catalytic subunit (subunit C) and a 65 kDa constant regulatory subunit (PR65 or subunit A), that associates with a variety of regulatory subunits.

It localises to the cytoplasm. The protein localises to the cytoskeleton. It is found in the membrane. Its function is as follows. The B regulatory subunit might modulate substrate selectivity and catalytic activity, and might also direct the localization of the catalytic enzyme to a particular subcellular compartment. Negatively controls the initiation of oocyte maturation. This is Serine/threonine-protein phosphatase 2A 55 kDa regulatory subunit B beta isoform (ppp2r2b) from Xenopus tropicalis (Western clawed frog).